The sequence spans 275 residues: Ribosomal RNA small subunit methyltransferase A (275 aa).

Positions 21, 23, 48, 69, 94, and 115 each coordinate S-adenosyl-L-methionine.

This sequence belongs to the class I-like SAM-binding methyltransferase superfamily. rRNA adenine N(6)-methyltransferase family. RsmA subfamily.

Its subcellular location is the cytoplasm. It catalyses the reaction adenosine(1518)/adenosine(1519) in 16S rRNA + 4 S-adenosyl-L-methionine = N(6)-dimethyladenosine(1518)/N(6)-dimethyladenosine(1519) in 16S rRNA + 4 S-adenosyl-L-homocysteine + 4 H(+). In terms of biological role, specifically dimethylates two adjacent adenosines (A1518 and A1519) in the loop of a conserved hairpin near the 3'-end of 16S rRNA in the 30S particle. May play a critical role in biogenesis of 30S subunits. The protein is Ribosomal RNA small subunit methyltransferase A of Clostridium botulinum (strain ATCC 19397 / Type A).